Consider the following 243-residue polypeptide: Probable transcriptional regulatory protein BRE_29 (243 aa).

This sequence belongs to the TACO1 family.

It is found in the cytoplasm. The chain is Probable transcriptional regulatory protein BRE_29 from Borrelia recurrentis (strain A1).